The following is a 99-amino-acid chain: Transcriptional regulator WhiB2 (99 aa).

One can recognise a 4Fe-4S Wbl-type domain in the interval 33-90 (LCAQTDPEAFFPEKGGSTRDAKRVCAKCEVREQCLKWAIDHDERFGIWGGMSERERRR). 4 residues coordinate [4Fe-4S] cluster: Cys-34, Cys-57, Cys-60, and Cys-66.

This sequence belongs to the WhiB family. It depends on [4Fe-4S] cluster as a cofactor. Post-translationally, the Fe-S cluster can be nitrosylated by nitric oxide (NO). Upon Fe-S cluster removal intramolecular disulfide bonds are formed.

It is found in the cytoplasm. Acts as a transcriptional regulator. Probably redox-responsive. The apo- but not holo-form probably binds DNA. The sequence is that of Transcriptional regulator WhiB2 (whiB2) from Bifidobacterium longum (strain NCC 2705).